A 125-amino-acid chain; its full sequence is Holo-[acyl-carrier-protein] synthase (125 aa).

Positions 8 and 55 each coordinate Mg(2+).

Belongs to the P-Pant transferase superfamily. AcpS family. Mg(2+) serves as cofactor.

The protein resides in the cytoplasm. The enzyme catalyses apo-[ACP] + CoA = holo-[ACP] + adenosine 3',5'-bisphosphate + H(+). Its function is as follows. Transfers the 4'-phosphopantetheine moiety from coenzyme A to a Ser of acyl-carrier-protein. This Treponema pallidum (strain Nichols) protein is Holo-[acyl-carrier-protein] synthase.